The primary structure comprises 270 residues: Hydroxyethylthiazole kinase (270 aa).

Position 44 (M44) interacts with substrate. ATP-binding residues include R119 and T165. Substrate is bound at residue G192.

It belongs to the Thz kinase family. Mg(2+) serves as cofactor.

It catalyses the reaction 5-(2-hydroxyethyl)-4-methylthiazole + ATP = 4-methyl-5-(2-phosphooxyethyl)-thiazole + ADP + H(+). It functions in the pathway cofactor biosynthesis; thiamine diphosphate biosynthesis; 4-methyl-5-(2-phosphoethyl)-thiazole from 5-(2-hydroxyethyl)-4-methylthiazole: step 1/1. Functionally, catalyzes the phosphorylation of the hydroxyl group of 4-methyl-5-beta-hydroxyethylthiazole (THZ). This is Hydroxyethylthiazole kinase from Corynebacterium efficiens (strain DSM 44549 / YS-314 / AJ 12310 / JCM 11189 / NBRC 100395).